A 313-amino-acid polypeptide reads, in one-letter code: Homoserine O-acetyltransferase (313 aa).

The active-site Acyl-thioester intermediate is the C144. Substrate is bound by residues K165 and S194. The active-site Proton acceptor is the H236. The active site involves E238. Substrate is bound at residue R250.

It belongs to the MetA family.

The protein resides in the cytoplasm. It carries out the reaction L-homoserine + acetyl-CoA = O-acetyl-L-homoserine + CoA. It functions in the pathway amino-acid biosynthesis; L-methionine biosynthesis via de novo pathway; O-acetyl-L-homoserine from L-homoserine: step 1/1. In terms of biological role, transfers an acetyl group from acetyl-CoA to L-homoserine, forming acetyl-L-homoserine. This chain is Homoserine O-acetyltransferase, found in Jannaschia sp. (strain CCS1).